A 59-amino-acid polypeptide reads, in one-letter code: Large ribosomal subunit protein bL32c (59 aa).

The segment at 37 to 59 (SRSFSSGNEHPKPKGFSGQQANK) is disordered.

This sequence belongs to the bacterial ribosomal protein bL32 family.

Its subcellular location is the plastid. It localises to the chloroplast. This is Large ribosomal subunit protein bL32c from Saccharum hybrid (Sugarcane).